The sequence spans 239 residues: IkB-like protein (239 aa).

ANK repeat units follow at residues 48–77 (NKITVFMLICIYGRLDFLRFLFKQESYPGE), 87–116 (DGNSAWHYLAEKNNHLLLEEVLDYFGKNGI), 124–153 (NGVTPIMKAAMRGRTLSVLSLLKYGANPNR), and 158–187 (KGFTTWDWAVFTGHADLVKTLNKGYQKPLF). A Nuclear localization signal motif is present at residues 81-87 (HYRRDKD). Positions 203 to 214 (KKKPKIIITGCE) match the Nuclear localization signal motif. Residues 206–213 (PKIIITGC) carry the PxIxITxC motif; Interaction with host PPP3CA motif. Residues 228 to 231 (FLCV) carry the FLCV motif motif.

The protein belongs to the asfivirus A238L family. As to quaternary structure, interacts with host PPIA. Interacts with host PPP3CA/Calcineurin. Interacts with host RELA/p65; interaction of the 32 kDa form with host RELA results in the formation of a stable complex with NF-kappa-B. Interacts with host PPP3R1. Interacts with host EP300; this interaction inhibits the association of host EP300 with host RELA, JUN and NFATC2. In terms of processing, the protein exists in a 28 kDa and a 32 kDa form, probably due to post-translational modifications which are neither phosphorylation, nor sumoylation.

The protein resides in the host nucleus. The protein localises to the host cytoplasm. IkB-like protein that inhibits the binding of NF-kappa-B to DNA, thereby downregulating pro-inflammatory cytokine production. Forms a heterodimer with the NF-kappa-B subunit RELA/p65 and prevents the activation of the NF-kappa-B transcription factor. Inhibits calcineurin function, which is required for the induction of nuclear factor of activated T cells (NFAT)-dependent immune response genes. Prevents the binding of substrates to calcineurin without affecting the phosphatase activity. Does not contain the serine residues that are phosphorylated by host IkB kinase and thus is not degraded following stimulation of the NFkB pathway. In Ornithodoros (relapsing fever ticks), this protein is IkB-like protein (A238L).